We begin with the raw amino-acid sequence, 1401 residues long: DNA-directed RNA polymerase subunit beta'' (1401 aa).

Residues C224, C295, C302, and C305 each coordinate Zn(2+).

This sequence belongs to the RNA polymerase beta' chain family. RpoC2 subfamily. In terms of assembly, in plastids the minimal PEP RNA polymerase catalytic core is composed of four subunits: alpha, beta, beta', and beta''. When a (nuclear-encoded) sigma factor is associated with the core the holoenzyme is formed, which can initiate transcription. Requires Zn(2+) as cofactor.

The protein resides in the plastid. The protein localises to the chloroplast. It catalyses the reaction RNA(n) + a ribonucleoside 5'-triphosphate = RNA(n+1) + diphosphate. Its function is as follows. DNA-dependent RNA polymerase catalyzes the transcription of DNA into RNA using the four ribonucleoside triphosphates as substrates. This chain is DNA-directed RNA polymerase subunit beta'', found in Ipomoea purpurea (Common morning glory).